The sequence spans 137 residues: Basic phospholipase A2 homolog MT1 (137 aa).

The N-terminal stretch at 1-16 (MRTLWIVALLLVGVEG) is a signal peptide. Disulfide bonds link Cys42–Cys131, Cys44–Cys60, Cys59–Cys111, Cys65–Cys137, Cys66–Cys104, Cys73–Cys97, and Cys91–Cys102. Residues 121–133 (KKYKAYFKFKCKK) are important for membrane-damaging activities in eukaryotes and bacteria; heparin-binding.

It belongs to the phospholipase A2 family. Group II subfamily. K49 sub-subfamily. Binds to heparin. In terms of tissue distribution, expressed by the venom gland.

Its subcellular location is the secreted. Its activity is regulated as follows. Heparin and wedelolactone inhibit the myotoxic activity. The PLA2 inhibitor, para-bromophenacyl bromide (BPB), inhibits the myotoxic activity. Its function is as follows. Snake venom phospholipase A2 homolog that lacks enzymatic activity. Has myotoxic activities. A model of myotoxic mechanism has been proposed: an apo Lys49-PLA2 is activated by the entrance of a hydrophobic molecule (e.g. fatty acid) at the hydrophobic channel of the protein leading to a reorientation of a monomer. This reorientation causes a transition between 'inactive' to 'active' states, causing alignment of C-terminal and membrane-docking sites (MDoS) side-by-side and putting the membrane-disruption sites (MDiS) in the same plane, exposed to solvent and in a symmetric position for both monomers. The MDoS region stabilizes the toxin on membrane by the interaction of charged residues with phospholipid head groups. Subsequently, the MDiS region destabilizes the membrane with penetration of hydrophobic residues. This insertion causes a disorganization of the membrane, allowing an uncontrolled influx of ions (i.e. calcium and sodium), and eventually triggering irreversible intracellular alterations and cell death. The polypeptide is Basic phospholipase A2 homolog MT1 (Agkistrodon contortrix laticinctus (Broad-banded copperhead)).